Reading from the N-terminus, the 398-residue chain is DNA replication and repair protein RecF (398 aa).

Position 30 to 37 (30 to 37 (GSNGLGKT)) interacts with ATP.

This sequence belongs to the RecF family.

Its subcellular location is the cytoplasm. Its function is as follows. The RecF protein is involved in DNA metabolism; it is required for DNA replication and normal SOS inducibility. RecF binds preferentially to single-stranded, linear DNA. It also seems to bind ATP. This chain is DNA replication and repair protein RecF, found in Renibacterium salmoninarum (strain ATCC 33209 / DSM 20767 / JCM 11484 / NBRC 15589 / NCIMB 2235).